The sequence spans 353 residues: Photosystem II D2 protein (353 aa).

The residue at position 2 (Thr2) is an N-acetylthreonine. At Thr2 the chain carries Phosphothreonine. The helical transmembrane segment at 41 to 61 threads the bilayer; the sequence is CAYFALGGWFTGTTFVTSWYT. His118 contacts chlorophyll a. Residues 125–141 traverse the membrane as a helical segment; the sequence is GFMLRQFELARSVQLRP. The pheophytin a site is built by Gln130 and Asn143. The helical transmembrane segment at 153–166 threads the bilayer; the sequence is VFVSVFLIYPLGQS. His198 contributes to the chlorophyll a binding site. Residues 208-228 traverse the membrane as a helical segment; that stretch reads AALLCAIHGATVENTLFEDGD. The a plastoquinone site is built by His215 and Phe262. His215 lines the Fe cation pocket. Residue His269 coordinates Fe cation. A helical membrane pass occupies residues 279–295; sequence GLWMSALGVVGLALNLR.

The protein belongs to the reaction center PufL/M/PsbA/D family. PSII is composed of 1 copy each of membrane proteins PsbA, PsbB, PsbC, PsbD, PsbE, PsbF, PsbH, PsbI, PsbJ, PsbK, PsbL, PsbM, PsbT, PsbX, PsbY, PsbZ, Psb30/Ycf12, at least 3 peripheral proteins of the oxygen-evolving complex and a large number of cofactors. It forms dimeric complexes. It depends on The D1/D2 heterodimer binds P680, chlorophylls that are the primary electron donor of PSII, and subsequent electron acceptors. It shares a non-heme iron and each subunit binds pheophytin, quinone, additional chlorophylls, carotenoids and lipids. There is also a Cl(-1) ion associated with D1 and D2, which is required for oxygen evolution. The PSII complex binds additional chlorophylls, carotenoids and specific lipids. as a cofactor.

The protein resides in the plastid. Its subcellular location is the chloroplast thylakoid membrane. The enzyme catalyses 2 a plastoquinone + 4 hnu + 2 H2O = 2 a plastoquinol + O2. Its function is as follows. Photosystem II (PSII) is a light-driven water:plastoquinone oxidoreductase that uses light energy to abstract electrons from H(2)O, generating O(2) and a proton gradient subsequently used for ATP formation. It consists of a core antenna complex that captures photons, and an electron transfer chain that converts photonic excitation into a charge separation. The D1/D2 (PsbA/PsbD) reaction center heterodimer binds P680, the primary electron donor of PSII as well as several subsequent electron acceptors. D2 is needed for assembly of a stable PSII complex. The polypeptide is Photosystem II D2 protein (Coffea arabica (Arabian coffee)).